The following is a 323-amino-acid chain: D-specific alpha-keto acid dehydrogenase (323 aa).

Residues 157 to 158, 230 to 232, and D256 each bind NAD(+); these read HI and TGR. R232 is an active-site residue. Residue E261 is part of the active site. The active-site Proton donor is H293. 293-296 is an NAD(+) binding site; it reads HTAY.

The protein belongs to the D-isomer specific 2-hydroxyacid dehydrogenase family.

In terms of biological role, required for high-level resistance to glycopeptides antibiotics. Catalyzes the reduction of 2-keto acids to 2-D-hydroxy acids that give rise to peptidoglycan precursors that terminate in the depsipeptide D-alanine-2-lactate rather than the dipeptide D-alanine-D-alanine thus preventing vancomycin binding. The sequence is that of D-specific alpha-keto acid dehydrogenase (vanHB) from Enterococcus faecalis (strain ATCC 700802 / V583).